The sequence spans 194 residues: CASP-like protein 1D1 (194 aa).

Residues 1–16 (MGSDETKSTLDTERST) are compositionally biased toward basic and acidic residues. The tract at residues 1–23 (MGSDETKSTLDTERSTVPRTGTT) is disordered. Residues 1–31 (MGSDETKSTLDTERSTVPRTGTTTKSCSITQ) lie on the Cytoplasmic side of the membrane. A helical transmembrane segment spans residues 32 to 52 (VVLRFVLFAATLTSIVVMVTS). Over 53–77 (KQTKNIFIPGTPIRIPAAKFTNSPA) the chain is Extracellular. Residues 78–98 (LIYFVVALSVACFYSIVSTFV) traverse the membrane as a helical segment. Residues 99–109 (TVSAFKKHSCS) lie on the Cytoplasmic side of the membrane. A helical membrane pass occupies residues 110–130 (AILLLNLAIMDAVMVGIVASA). Residues 131–163 (TGAGGGVAYLGLKGNKEVRWGKICNIYDKFCRH) are Extracellular-facing. Residues 164-184 (VGGAIAVSLFASVILLLLSII) traverse the membrane as a helical segment. Topologically, residues 185–194 (SVLSLYKKIR) are cytoplasmic.

Belongs to the Casparian strip membrane proteins (CASP) family. In terms of assembly, homodimer and heterodimers.

It localises to the cell membrane. This Arabidopsis lyrata subsp. lyrata (Lyre-leaved rock-cress) protein is CASP-like protein 1D1.